A 295-amino-acid chain; its full sequence is 4-hydroxy-tetrahydrodipicolinate synthase (295 aa).

A pyruvate-binding site is contributed by Thr-47. The Proton donor/acceptor role is filled by Tyr-135. The active-site Schiff-base intermediate with substrate is the Lys-163. Ile-206 is a binding site for pyruvate.

Homodimer. In fact, exists in a monomer-dimer equilibrium in solution, shifted in favor of the dimer in presence of the substrate pyruvate; the monomer has significantly reduced activity compared with the dimer.

It localises to the cytoplasm. It catalyses the reaction L-aspartate 4-semialdehyde + pyruvate = (2S,4S)-4-hydroxy-2,3,4,5-tetrahydrodipicolinate + H2O + H(+). Its pathway is amino-acid biosynthesis; L-lysine biosynthesis via DAP pathway; (S)-tetrahydrodipicolinate from L-aspartate: step 3/4. Is insensitive to lysine-feedback inhibition. Shows ASA substrate inhibition. Catalyzes the condensation of (S)-aspartate-beta-semialdehyde [(S)-ASA] and pyruvate to 4-hydroxy-tetrahydrodipicolinate (HTPA). The chain is 4-hydroxy-tetrahydrodipicolinate synthase from Staphylococcus aureus (strain MRSA252).